The chain runs to 681 residues: Elongation factor G (681 aa).

The tr-type G domain maps to 5 to 279 (KNIRNIGIIA…SIVNFLPSPI (275 aa)). Residues 14–21 (AHVDAGKT), 82–86 (DTPGH), and 136–139 (NKLD) contribute to the GTP site.

The protein belongs to the TRAFAC class translation factor GTPase superfamily. Classic translation factor GTPase family. EF-G/EF-2 subfamily.

The protein localises to the cytoplasm. Its function is as follows. Catalyzes the GTP-dependent ribosomal translocation step during translation elongation. During this step, the ribosome changes from the pre-translocational (PRE) to the post-translocational (POST) state as the newly formed A-site-bound peptidyl-tRNA and P-site-bound deacylated tRNA move to the P and E sites, respectively. Catalyzes the coordinated movement of the two tRNA molecules, the mRNA and conformational changes in the ribosome. This is Elongation factor G from Carsonella ruddii (strain PV).